The primary structure comprises 394 residues: Protein TsgA homolog (394 aa).

12 consecutive transmembrane segments (helical) span residues 11–31 (WISF…GMVL), 51–71 (FLNA…EIVP), 76–96 (LIFG…SHSL), 101–121 (LCMF…TFLI), 135–155 (LFTD…AAAI), 163–183 (YWVY…ALCF), 205–225 (LGVA…LGFI), 245–265 (SVVG…SAIL), 273–293 (IVTA…NTTD), 299–319 (WIIM…ITLG), 333–353 (FILT…GPIV), and 362–382 (LATT…LGFV).

This sequence belongs to the major facilitator superfamily. TsgA family.

It is found in the cell inner membrane. This Erwinia tasmaniensis (strain DSM 17950 / CFBP 7177 / CIP 109463 / NCPPB 4357 / Et1/99) protein is Protein TsgA homolog.